The following is a 197-amino-acid chain: UDP-N-acetylglucosamine transferase subunit alg13 (197 aa).

Positions 174 to 197 (VRGPDQKNQPTLEQVMSDEMGFVD) are disordered.

Belongs to the glycosyltransferase 28 family. Heterodimer with alg14 to form a functional enzyme.

It is found in the endoplasmic reticulum. It catalyses the reaction an N-acetyl-alpha-D-glucosaminyl-diphospho-di-trans,poly-cis-dolichol + UDP-N-acetyl-alpha-D-glucosamine = an N,N'-diacetylchitobiosyl-diphospho-di-trans,poly-cis-dolichol + UDP + H(+). In terms of biological role, involved in protein N-glycosylation. Essential for the second step of the dolichol-linked oligosaccharide pathway. The sequence is that of UDP-N-acetylglucosamine transferase subunit alg13 (alg13) from Aspergillus fumigatus (strain ATCC MYA-4609 / CBS 101355 / FGSC A1100 / Af293) (Neosartorya fumigata).